Here is a 752-residue protein sequence, read N- to C-terminus: Photosystem I P700 chlorophyll a apoprotein A1 (752 aa).

8 helical membrane passes run 73–96 (IFSA…FHGA), 159–182 (LYWT…FHYH), 198–222 (MNHH…HIAL), 294–312 (IAHH…GHMY), 349–372 (WHAQ…HHMY), 388–414 (LSLF…IFMV), 436–458 (AIIS…FYIH), and 533–551 (FMVH…LILL). Positions 575 and 584 each coordinate [4Fe-4S] cluster. 2 consecutive transmembrane segments (helical) span residues 591–612 (HVFL…HFSW) and 666–688 (SSAY…MFLF). His-677 is a binding site for chlorophyll a'. Chlorophyll a contacts are provided by Met-685 and Tyr-693. Trp-694 provides a ligand contact to phylloquinone. Residues 726–746 (AVGLAHYLLGGIGTTWAFFLA) form a helical membrane-spanning segment.

It belongs to the PsaA/PsaB family. As to quaternary structure, the PsaA/B heterodimer binds the P700 chlorophyll special pair and subsequent electron acceptors. PSI consists of a core antenna complex that captures photons, and an electron transfer chain that converts photonic excitation into a charge separation. The eukaryotic PSI reaction center is composed of at least 11 subunits. It depends on P700 is a chlorophyll a/chlorophyll a' dimer, A0 is one or more chlorophyll a, A1 is one or both phylloquinones and FX is a shared 4Fe-4S iron-sulfur center. as a cofactor.

Its subcellular location is the plastid. The protein resides in the chloroplast thylakoid membrane. It catalyses the reaction reduced [plastocyanin] + hnu + oxidized [2Fe-2S]-[ferredoxin] = oxidized [plastocyanin] + reduced [2Fe-2S]-[ferredoxin]. Functionally, psaA and PsaB bind P700, the primary electron donor of photosystem I (PSI), as well as the electron acceptors A0, A1 and FX. PSI is a plastocyanin/cytochrome c6-ferredoxin oxidoreductase, converting photonic excitation into a charge separation, which transfers an electron from the donor P700 chlorophyll pair to the spectroscopically characterized acceptors A0, A1, FX, FA and FB in turn. Oxidized P700 is reduced on the lumenal side of the thylakoid membrane by plastocyanin or cytochrome c6. This Thalassiosira pseudonana (Marine diatom) protein is Photosystem I P700 chlorophyll a apoprotein A1.